Consider the following 208-residue polypeptide: Urease accessory protein UreG (208 aa).

10 to 17 (GPVGSGKT) contributes to the GTP binding site.

Belongs to the SIMIBI class G3E GTPase family. UreG subfamily. As to quaternary structure, homodimer. UreD, UreF and UreG form a complex that acts as a GTP-hydrolysis-dependent molecular chaperone, activating the urease apoprotein by helping to assemble the nickel containing metallocenter of UreC. The UreE protein probably delivers the nickel.

The protein localises to the cytoplasm. In terms of biological role, facilitates the functional incorporation of the urease nickel metallocenter. This process requires GTP hydrolysis, probably effectuated by UreG. The chain is Urease accessory protein UreG from Halalkalibacterium halodurans (strain ATCC BAA-125 / DSM 18197 / FERM 7344 / JCM 9153 / C-125) (Bacillus halodurans).